Reading from the N-terminus, the 175-residue chain is ATP synthase subunit b (175 aa).

Residues 22–44 (MLVQLFFFLILLALLKKFAWGPL) traverse the membrane as a helical segment.

The protein belongs to the ATPase B chain family. In terms of assembly, F-type ATPases have 2 components, F(1) - the catalytic core - and F(0) - the membrane proton channel. F(1) has five subunits: alpha(3), beta(3), gamma(1), delta(1), epsilon(1). F(0) has three main subunits: a(1), b(2) and c(10-14). The alpha and beta chains form an alternating ring which encloses part of the gamma chain. F(1) is attached to F(0) by a central stalk formed by the gamma and epsilon chains, while a peripheral stalk is formed by the delta and b chains.

The protein resides in the cell membrane. Its function is as follows. F(1)F(0) ATP synthase produces ATP from ADP in the presence of a proton or sodium gradient. F-type ATPases consist of two structural domains, F(1) containing the extramembraneous catalytic core and F(0) containing the membrane proton channel, linked together by a central stalk and a peripheral stalk. During catalysis, ATP synthesis in the catalytic domain of F(1) is coupled via a rotary mechanism of the central stalk subunits to proton translocation. Functionally, component of the F(0) channel, it forms part of the peripheral stalk, linking F(1) to F(0). In Oceanobacillus iheyensis (strain DSM 14371 / CIP 107618 / JCM 11309 / KCTC 3954 / HTE831), this protein is ATP synthase subunit b.